A 660-amino-acid polypeptide reads, in one-letter code: GTP-binding protein BRASSINAZOLE INSENSITIVE PALE GREEN 2, chloroplastic (660 aa).

Residues 1-53 (MVVLISSTVTICNVKPKLEDGNFRVSRLIHRPEVPFFSGLSNEKKKKCAVSVM) constitute a chloroplast transit peptide. Disordered regions lie at residues 127–158 (EGDEHVENDELAGFEMVDDDADEEEEGEDDEM) and 191–212 (NDVELDGFAPAGVGYGNVTEEK). Positions 130-158 (EHVENDELAGFEMVDDDADEEEEGEDDEM) are enriched in acidic residues. One can recognise a CP-type G domain in the interval 273-457 (STRLIKPMSN…MYDTPGLLHP (185 aa)).

It belongs to the TRAFAC class YlqF/YawG GTPase family. As to quaternary structure, binds to chloroplast 16S and 23S ribosomal RNAs. In terms of tissue distribution, mostly expressed in stems, petioles, leaves and flowers and, at low levels, also in roots.

Its subcellular location is the plastid. It is found in the chloroplast stroma. In terms of biological role, required for brassinosteroid- (BR) mediated post-transcriptional and translational regulation in the chloroplast, including accumulation of chloroplast rRNA. Involved in chloroplast differentiation. The polypeptide is GTP-binding protein BRASSINAZOLE INSENSITIVE PALE GREEN 2, chloroplastic (Arabidopsis thaliana (Mouse-ear cress)).